The sequence spans 373 residues: Glutamine synthetase (373 aa).

N-acetylalanine is present on Ala-2. Residues 2–25 (ATSASSHLNKGIKQVYMSLPQGEK) form a required for glutamine-induced ubiquitination by CRL4(CRBN) and proteasomal degradation region. 2 positions are modified to N6-acetyllysine: Lys-11 and Lys-14. Residues 24 to 106 (EKVQAMYIWI…VFCEVFKYNR (83 aa)) form the GS beta-grasp domain. Tyr-104 bears the Phosphotyrosine mark. In terms of domain architecture, GS catalytic spans 113–373 (LRHTCKRIMD…TGDEPFQYKN (261 aa)). Glu-134 lines the ATP pocket. Residues Glu-134, Glu-136, Glu-196, and Glu-203 each contribute to the Mn(2+) site. Residue 203–208 (EFQIGP) participates in ATP binding. An L-glutamate-binding site is contributed by 246 to 247 (NW). His-253 contributes to the Mn(2+) binding site. Residues 255–257 (NFS), Arg-319, and Arg-324 contribute to the ATP site. Arg-319 is a binding site for L-glutamate. 336–338 (YFE) is an ADP binding site. Glu-338 provides a ligand contact to Mn(2+). Arg-340 is an L-glutamate binding site. Position 343 is a phosphoserine (Ser-343).

This sequence belongs to the glutamine synthetase family. In terms of assembly, decamer; composed of two pentamers. Interacts with PALMD. Interacts with RHOJ. Interacts with BEST2; this interaction tethers a fraction of GLUL to the membrane, causing a decrease of cytosolic glutamine synthase (GS) activity and inhibits the chloride channel activity of BEST2 by affecting the gating at the aperture in the absence of intracellular glutamate. It depends on Mg(2+) as a cofactor. Mn(2+) serves as cofactor. In terms of processing, palmitoylated; undergoes autopalmitoylation. Acetylated by EP300/p300; acetylation is stimulated by increased glutamine levels and promotes ubiquitin-mediated proteasomal degradation. Post-translationally, ubiquitinated by ZNRF1. Ubiquitinated by the DCX (DDB1-CUL4-X-box) E3 ubiquitin-protein ligase complex called CRL4(CRBN), leading to proteasomal degradation.

It is found in the cytoplasm. It localises to the cytosol. The protein resides in the microsome. The protein localises to the mitochondrion. Its subcellular location is the cell membrane. The enzyme catalyses L-glutamate + NH4(+) + ATP = L-glutamine + ADP + phosphate + H(+). It carries out the reaction L-cysteinyl-[protein] + hexadecanoyl-CoA = S-hexadecanoyl-L-cysteinyl-[protein] + CoA. Glutamine synthetase activity is inhibited by methionine sulfoximine (MSO). Functionally, glutamine synthetase that catalyzes the ATP-dependent conversion of glutamate and ammonia to glutamine. Its role depends on tissue localization: in the brain, it regulates the levels of toxic ammonia and converts neurotoxic glutamate to harmless glutamine, whereas in the liver, it is one of the enzymes responsible for the removal of ammonia. Plays a key role in ammonium detoxification during erythropoiesis: the glutamine synthetase activity is required to remove ammonium generated by porphobilinogen deaminase (HMBS) during heme biosynthesis to prevent ammonium accumulation and oxidative stress. Essential for proliferation of fetal skin fibroblasts. Independently of its glutamine synthetase activity, required for endothelial cell migration during vascular development. Involved in angiogenesis by regulating membrane localization and activation of the GTPase RHOJ, possibly by promoting RHOJ palmitoylation. May act as a palmitoyltransferase for RHOJ: able to autopalmitoylate and then transfer the palmitoyl group to RHOJ. Plays a role in ribosomal 40S subunit biogenesis. Through the interaction with BEST2, inhibits BEST2 channel activity by affecting the gating at the aperture in the absence of intracellular L-glutamate, but sensitizes BEST2 to intracellular L-glutamate, which promotes the opening of BEST2 and thus relieves its inhibitory effect on BEST2. The chain is Glutamine synthetase from Canis lupus familiaris (Dog).